We begin with the raw amino-acid sequence, 228 residues long: Phosphoribosylformylglycinamidine synthase subunit PurQ (228 aa).

One can recognise a Glutamine amidotransferase type-1 domain in the interval 2 to 225 (KAAVISFPGS…INQTEGADVR (224 aa)). The active-site Nucleophile is Cys86. Active-site residues include His194 and Glu196.

In terms of assembly, part of the FGAM synthase complex composed of 1 PurL, 1 PurQ and 2 PurS subunits.

It localises to the cytoplasm. It catalyses the reaction N(2)-formyl-N(1)-(5-phospho-beta-D-ribosyl)glycinamide + L-glutamine + ATP + H2O = 2-formamido-N(1)-(5-O-phospho-beta-D-ribosyl)acetamidine + L-glutamate + ADP + phosphate + H(+). The enzyme catalyses L-glutamine + H2O = L-glutamate + NH4(+). The protein operates within purine metabolism; IMP biosynthesis via de novo pathway; 5-amino-1-(5-phospho-D-ribosyl)imidazole from N(2)-formyl-N(1)-(5-phospho-D-ribosyl)glycinamide: step 1/2. Functionally, part of the phosphoribosylformylglycinamidine synthase complex involved in the purines biosynthetic pathway. Catalyzes the ATP-dependent conversion of formylglycinamide ribonucleotide (FGAR) and glutamine to yield formylglycinamidine ribonucleotide (FGAM) and glutamate. The FGAM synthase complex is composed of three subunits. PurQ produces an ammonia molecule by converting glutamine to glutamate. PurL transfers the ammonia molecule to FGAR to form FGAM in an ATP-dependent manner. PurS interacts with PurQ and PurL and is thought to assist in the transfer of the ammonia molecule from PurQ to PurL. The protein is Phosphoribosylformylglycinamidine synthase subunit PurQ of Lacticaseibacillus paracasei (strain ATCC 334 / BCRC 17002 / CCUG 31169 / CIP 107868 / KCTC 3260 / NRRL B-441) (Lactobacillus paracasei).